A 528-amino-acid polypeptide reads, in one-letter code: Endoglucanase 24 (528 aa).

Positions 1 to 24 (MGSKTKGCCGWLIVALVASLVATA) are cleaved as a signal peptide. The active-site Nucleophile is the Asp109. N-linked (GlcNAc...) asparagine glycosylation occurs at Asn259. His446 is an active-site residue. Asn487 carries N-linked (GlcNAc...) asparagine glycosylation. Residues Asp492 and Glu501 contribute to the active site.

It belongs to the glycosyl hydrolase 9 (cellulase E) family.

The protein resides in the secreted. It carries out the reaction Endohydrolysis of (1-&gt;4)-beta-D-glucosidic linkages in cellulose, lichenin and cereal beta-D-glucans.. This is Endoglucanase 24 from Oryza sativa subsp. japonica (Rice).